A 214-amino-acid polypeptide reads, in one-letter code: ER lumen protein-retaining receptor 3 (214 aa).

The Lumenal portion of the chain corresponds to 1-4 (MNIF). The helical transmembrane segment at 5–24 (RILGDVSHLLAIIILLLKMW) threads the bilayer. The Cytoplasmic segment spans residues 25 to 32 (KSKSCAGI). Residues 33–52 (SGKSQLLFALVFTTRYLDLF) form a helical membrane-spanning segment. The segment at 47 to 48 (RY) is interaction with the K-D-E-L motif on target proteins. At 53–58 (TVFISP) the chain is on the lumenal side. The helical transmembrane segment at 59 to 79 (YNTVMKIIFLACAYVTVYLIY) threads the bilayer. The Cytoplasmic segment spans residues 80–92 (GKLRKSYDSENDT). Residues 93-110 (FRLEFLLVPVIGLSFLEN) form a helical membrane-spanning segment. Over 111–116 (YEFTPL) the chain is Lumenal. The chain crosses the membrane as a helical span at residues 117-135 (EILWTFSIYLESVAILPQL). Residues 136–149 (FMISKTGEAESITT) are Cytoplasmic-facing. The chain crosses the membrane as a helical span at residues 150-168 (HYLFFLGLYRVLYLANWIW). The interval 159–169 (RVLYLANWIWR) is interaction with the K-D-E-L motif on target proteins. Residues 169–178 (RYHTEKFYDQ) are Lumenal-facing. A helical membrane pass occupies residues 179–199 (IAVVSGVVQTIFYFDFFYLYV). Topologically, residues 200 to 214 (TKVLKGKKLSLPMPV) are cytoplasmic. Residues 204-207 (KGKK) are important for recycling of cargo proteins with the sequence motif K-D-E-L from the Golgi to the endoplasmic reticulum.

It belongs to the ERD2 family.

The protein resides in the endoplasmic reticulum membrane. The protein localises to the golgi apparatus membrane. It localises to the cytoplasmic vesicle. It is found in the COPI-coated vesicle membrane. Functionally, receptor for the C-terminal sequence motif K-D-E-L that is present on endoplasmic reticulum resident proteins and that mediates their recycling from the Golgi back to the endoplasmic reticulum. The polypeptide is ER lumen protein-retaining receptor 3 (kdelr3) (Xenopus laevis (African clawed frog)).